A 305-amino-acid chain; its full sequence is Acetyl-coenzyme A carboxylase carboxyl transferase subunit beta (305 aa).

The region spanning 27 to 296 (LWVKCSSCRE…SPAKAELAGR (270 aa)) is the CoA carboxyltransferase N-terminal domain. Residues cysteine 31, cysteine 34, cysteine 50, and cysteine 53 each coordinate Zn(2+). The C4-type zinc finger occupies 31-53 (CSSCRELIYKKQLNDNLKVCPKC).

The protein belongs to the AccD/PCCB family. Acetyl-CoA carboxylase is a heterohexamer composed of biotin carboxyl carrier protein (AccB), biotin carboxylase (AccC) and two subunits each of ACCase subunit alpha (AccA) and ACCase subunit beta (AccD). Zn(2+) serves as cofactor.

It localises to the cytoplasm. The catalysed reaction is N(6)-carboxybiotinyl-L-lysyl-[protein] + acetyl-CoA = N(6)-biotinyl-L-lysyl-[protein] + malonyl-CoA. The protein operates within lipid metabolism; malonyl-CoA biosynthesis; malonyl-CoA from acetyl-CoA: step 1/1. Functionally, component of the acetyl coenzyme A carboxylase (ACC) complex. Biotin carboxylase (BC) catalyzes the carboxylation of biotin on its carrier protein (BCCP) and then the CO(2) group is transferred by the transcarboxylase to acetyl-CoA to form malonyl-CoA. The chain is Acetyl-coenzyme A carboxylase carboxyl transferase subunit beta from Chloroflexus aurantiacus (strain ATCC 29366 / DSM 635 / J-10-fl).